Here is a 191-residue protein sequence, read N- to C-terminus: Putative NADH dehydrogenase/NAD(P)H nitroreductase (191 aa).

Residue 127–132 (AAHSLG) coordinates NAD(+).

Belongs to the nitroreductase family. FMN is required as a cofactor.

The chain is Putative NADH dehydrogenase/NAD(P)H nitroreductase from Methanothermobacter thermautotrophicus (strain ATCC 29096 / DSM 1053 / JCM 10044 / NBRC 100330 / Delta H) (Methanobacterium thermoautotrophicum).